A 141-amino-acid polypeptide reads, in one-letter code: Hemoglobin subunit alpha (141 aa).

One can recognise a Globin domain in the interval 1–141 (VLSAKDKTNI…VSTVLTSKYR (141 aa)). Phosphoserine is present on Ser-3. Lys-7 carries the N6-succinyllysine modification. The residue at position 8 (Thr-8) is a Phosphothreonine. Residue Lys-16 is modified to N6-acetyllysine; alternate. Lys-16 bears the N6-succinyllysine; alternate mark. Tyr-24 is subject to Phosphotyrosine. Lys-40 is subject to N6-succinyllysine. A Phosphoserine modification is found at Ser-49. His-58 is a binding site for O2. His-87 is a heme b binding site. Phosphoserine is present on Ser-102. Thr-108 bears the Phosphothreonine mark. 2 positions are modified to phosphoserine: Ser-124 and Ser-131. Residues Thr-134 and Thr-137 each carry the phosphothreonine modification. Ser-138 carries the phosphoserine modification.

The protein belongs to the globin family. In terms of assembly, heterotetramer of two alpha chains and two beta chains. In terms of tissue distribution, red blood cells.

Its function is as follows. Involved in oxygen transport from the lung to the various peripheral tissues. In terms of biological role, hemopressin acts as an antagonist peptide of the cannabinoid receptor CNR1. Hemopressin-binding efficiently blocks cannabinoid receptor CNR1 and subsequent signaling. This Mesocricetus auratus (Golden hamster) protein is Hemoglobin subunit alpha (HBA).